A 376-amino-acid polypeptide reads, in one-letter code: MDILWFIPTHGDGRYLGTNTGGRAADHTYFQQVAQAADRLGYTGVLLPTGRSCEDPWITAAALASVTKNLKFLVAVRPGLMQPSVAARMASTFDRLAEGRLLINVVAGGDPYELAGDGLFISHDERYEATNEFLDIWRSLLKGETVSYSGKHLKTENGRLLFPPAQQPHPPIYFGGSSKAGQETAAKHADVYLTWGEPPHLVKEKIQSVKKKAEKEGRTVRFGIRLHVIVRETEKEAWQAADRLISRLEDETIAAAQNAMKRMDSSGQKRMVQLHQGNRSNLEISPNLWAGIGLVRGGAGTALVGDPETVASRIKEYADIGIESFIFSGYPHLEEAYHFAEKVFPLLPFRTKLQSKASGEVIGNDHFPSRQKEKTV.

The protein belongs to the SsuD family.

The enzyme catalyses an alkanesulfonate + FMNH2 + O2 = an aldehyde + FMN + sulfite + H2O + 2 H(+). Catalyzes the desulfonation of aliphatic sulfonates. The sequence is that of Alkanesulfonate monooxygenase from Bacillus licheniformis (strain ATCC 14580 / DSM 13 / JCM 2505 / CCUG 7422 / NBRC 12200 / NCIMB 9375 / NCTC 10341 / NRRL NRS-1264 / Gibson 46).